The chain runs to 431 residues: Acyl transferase 8 (431 aa).

Residue His-169 is the Proton acceptor of the active site. Disordered regions lie at residues 220-247 (VADA…RAPA), 260-313 (HHAG…DHLR), and 331-400 (GLRV…PPPT). Residues 224–234 (RGGVRPGVPRP) show a composition bias toward low complexity. Positions 264–273 (DGGGGGGGGR) are enriched in gly residues. 2 stretches are compositionally biased toward basic residues: residues 297–306 (ERRRRRRRGR) and 335–380 (GRPR…RRLP). Residues 381–394 (QRHDAPRLITERAH) are compositionally biased toward basic and acidic residues.

This sequence belongs to the plant acyltransferase family.

In terms of biological role, involved in the incorporation of ferulate into the cell wall. May act as arabinoxylan feruloyl transferase. This chain is Acyl transferase 8, found in Oryza sativa subsp. japonica (Rice).